The sequence spans 467 residues: ATP synthase subunit beta (467 aa).

150 to 157 (GGAGVGKT) is an ATP binding site.

Belongs to the ATPase alpha/beta chains family. F-type ATPases have 2 components, CF(1) - the catalytic core - and CF(0) - the membrane proton channel. CF(1) has five subunits: alpha(3), beta(3), gamma(1), delta(1), epsilon(1). CF(0) has three main subunits: a(1), b(2) and c(9-12). The alpha and beta chains form an alternating ring which encloses part of the gamma chain. CF(1) is attached to CF(0) by a central stalk formed by the gamma and epsilon chains, while a peripheral stalk is formed by the delta and b chains.

The protein resides in the cell inner membrane. The enzyme catalyses ATP + H2O + 4 H(+)(in) = ADP + phosphate + 5 H(+)(out). Its function is as follows. Produces ATP from ADP in the presence of a proton gradient across the membrane. The catalytic sites are hosted primarily by the beta subunits. This Polaromonas sp. (strain JS666 / ATCC BAA-500) protein is ATP synthase subunit beta.